The sequence spans 111 residues: Natriuretic peptide TNP-b (111 aa).

The first 27 residues, methionine 1 to glycine 27, serve as a signal peptide directing secretion. The propeptide occupies lysine 28–arginine 71. 2 disordered regions span residues valine 51–glycine 77 and serine 92–serine 111. A disulfide bridge connects residues cysteine 80 and cysteine 96. Positions isoleucine 107–serine 111 are excised as a propeptide.

This sequence belongs to the natriuretic peptide family. As to expression, expressed by the venom gland.

The protein localises to the secreted. Snake venom natriuretic peptide that exhibits vasoactive and probable hypotensive activity. Is only weakly active on natriuretic peptide receptor-C (NPR3). The sequence is that of Natriuretic peptide TNP-b from Oxyuranus scutellatus scutellatus (Australian taipan).